The chain runs to 487 residues: METVQLRNPPRRQLKKLDEDSLTKQPEEVFDVLEKLGEGSYGSVYKAIHKETGQIVAIKQVPVESDLQEIIKEISIMQQCDSPHVVKYYGSYFKNTDLWIVMEYCGAGSVSDIIRLRNKTLTEDEIATILQSTLKGLEYLHFMRKIHRDIKAGNILLNTEGHAKLADFGVAGQLTDTMAKRNTVIGTPFWMAPEVIQEIGYNCVADIWSLGITAIEMAEGKPPYADIHPMRAIFMIPTNPPPTFRKPELWSDNFMDFVRQCLVKSPDQRATATQLLQHPFVKSAKGVSILRDLINEAMDVKLKRQEAQQREVDQDDEENSEEDELDSGTMVRAVGDDMGTVRVASTMSDEANTMIEHDDTLPSQLGTMVINAEDEEEEGTMKRRDETMQPAKPSFLEYFEQKEKENQISSFGKSVPGPLKNSADWKVPQDGDYEFLKSWTVEDLQKRLLALDPMMEQEIEEIRQKYQSKRQPILDAIEAKKRRQQNF.

N-acetylmethionine is present on methionine 1. Residue threonine 3 is modified to Phosphothreonine. Residues 30-281 (FDVLEKLGEG…ATQLLQHPFV (252 aa)) form the Protein kinase domain. Residues 36 to 44 (LGEGSYGSV) and lysine 59 contribute to the ATP site. Catalysis depends on aspartate 149, which acts as the Proton acceptor. Phosphothreonine; by autocatalysis is present on threonine 183. Residue serine 265 is modified to Phosphoserine. A coiled-coil region spans residues 290–310 (LRDLINEAMDVKLKRQEAQQR). The segment at 305–338 (QEAQQREVDQDDEENSEEDELDSGTMVRAVGDDM) is disordered. The segment covering 313–326 (DQDDEENSEEDELD) has biased composition (acidic residues). At serine 320 the chain carries Phosphoserine. A phosphothreonine mark is found at threonine 340 and threonine 367. Threonine 387 is subject to Phosphothreonine; by PKB/AKT1. Phosphoserine occurs at positions 410 and 414. Tyrosine 433 carries the phosphotyrosine modification. One can recognise an SARAH domain in the interval 433-480 (YEFLKSWTVEDLQKRLLALDPMMEQEIEEIRQKYQSKRQPILDAIEAK).

It belongs to the protein kinase superfamily. STE Ser/Thr protein kinase family. STE20 subfamily. Homodimer; mediated via the coiled-coil region. Interacts with NORE1, which inhibits autoactivation. Interacts with and stabilizes SAV1. Interacts with RASSF1. Interacts with FOXO3. Interacts with RASSF2 (via SARAH domain). Interacts with AR, PKB/AKT1, TNNI3 and SIRT1. Interacts with DLG5 (via PDZ domain 3). Interacts with MARK3 and SCRIB in the presence of DLG5. The cofactor is Mg(2+). In terms of processing, autophosphorylated on serine and threonine residues. Phosphorylation at Thr-387 by PKB/AKT1, leads to inhibition of its: kinase activity, nuclear translocation and autophosphorylation at Thr-183. It also diminishes its cleavage by caspases and its ability to phosphorylate FOXO3. Proteolytically cleaved by caspase-3 during apoptosis at Asp-326 and Asp-349 resulting in a 37 kDa or a 39 kDa subunit respectively. The 39 kDa subunit is further cleaved into the 37 kDa form. Proteolytic cleavage results in kinase activation and nuclear translocation of the truncated form (MST1/N). It is less likely that cleavage at Asp-349 is a prerequisite for activation as this site is not conserved in the murine ortholog.

It localises to the cytoplasm. It is found in the nucleus. The enzyme catalyses L-seryl-[protein] + ATP = O-phospho-L-seryl-[protein] + ADP + H(+). It catalyses the reaction L-threonyl-[protein] + ATP = O-phospho-L-threonyl-[protein] + ADP + H(+). Its activity is regulated as follows. Inhibited by the C-terminal non-catalytic region. Activated by caspase-cleavage. Full activation also requires homodimerization and autophosphorylation of Thr-183. Activated by RASSF1 which acts by preventing its dephosphorylation. Functionally, stress-activated, pro-apoptotic kinase which, following caspase-cleavage, enters the nucleus and induces chromatin condensation followed by internucleosomal DNA fragmentation. Key component of the Hippo signaling pathway which plays a pivotal role in organ size control and tumor suppression by restricting proliferation and promoting apoptosis. The core of this pathway is composed of a kinase cascade wherein STK3/MST2 and STK4/MST1, in complex with its regulatory protein SAV1, phosphorylates and activates LATS1/2 in complex with its regulatory protein MOB1, which in turn phosphorylates and inactivates YAP1 oncoprotein and WWTR1/TAZ. Phosphorylation of YAP1 by LATS2 inhibits its translocation into the nucleus to regulate cellular genes important for cell proliferation, cell death, and cell migration. STK3/MST2 and STK4/MST1 are required to repress proliferation of mature hepatocytes, to prevent activation of facultative adult liver stem cells (oval cells), and to inhibit tumor formation. Phosphorylates 'Ser-14' of histone H2B (H2BS14ph) during apoptosis. Phosphorylates FOXO3 upon oxidative stress, which results in its nuclear translocation and cell death initiation. Phosphorylates MOBKL1A, MOBKL1B and RASSF2. Phosphorylates TNNI3 (cardiac Tn-I) and alters its binding affinity to TNNC1 (cardiac Tn-C) and TNNT2 (cardiac Tn-T). Phosphorylates FOXO1 on 'Ser-212' and regulates its activation and stimulates transcription of PMAIP1 in a FOXO1-dependent manner. Phosphorylates SIRT1 and inhibits SIRT1-mediated p53/TP53 deacetylation, thereby promoting p53/TP53 dependent transcription and apoptosis upon DNA damage. Acts as an inhibitor of PKB/AKT1. Phosphorylates AR on 'Ser-650' and suppresses its activity by intersecting with PKB/AKT1 signaling and antagonizing formation of AR-chromatin complexes. This is Serine/threonine-protein kinase 4 (STK4) from Lemur catta (Ring-tailed lemur).